The primary structure comprises 251 residues: Triosephosphate isomerase (251 aa).

9 to 11 (NWK) lines the substrate pocket. His95 acts as the Electrophile in catalysis. Residue Glu167 is the Proton acceptor of the active site. Substrate is bound by residues Gly173, Ser213, and 234–235 (GG).

Belongs to the triosephosphate isomerase family. In terms of assembly, homodimer.

The protein resides in the cytoplasm. It catalyses the reaction D-glyceraldehyde 3-phosphate = dihydroxyacetone phosphate. It functions in the pathway carbohydrate biosynthesis; gluconeogenesis. Its pathway is carbohydrate degradation; glycolysis; D-glyceraldehyde 3-phosphate from glycerone phosphate: step 1/1. Involved in the gluconeogenesis. Catalyzes stereospecifically the conversion of dihydroxyacetone phosphate (DHAP) to D-glyceraldehyde-3-phosphate (G3P). This is Triosephosphate isomerase from Geotalea uraniireducens (strain Rf4) (Geobacter uraniireducens).